Consider the following 289-residue polypeptide: BTB/POZ domain-containing protein KCTD7 (289 aa).

The tract at residues 1–42 is disordered; the sequence is MVVVNGREPDSRHSDGAMSSSEAEDDFLEPATPTATQAGHGL. One can recognise a BTB domain in the interval 53 to 141; sequence VPLNIGGAHF…YAIGPLLEQL (89 aa).

In terms of assembly, interacts with CUL3.

It localises to the cell membrane. The protein localises to the cytoplasm. The protein resides in the cytosol. Its function is as follows. May be involved in the control of excitability of cortical neurons. The chain is BTB/POZ domain-containing protein KCTD7 (Kctd7) from Rattus norvegicus (Rat).